Consider the following 368-residue polypeptide: MTTPSAELPALARIRDDVRAMQAYVVADATGYLKMDAMENPFGLPPALQAALGQRLGQLALNRYPGTRQNDLKAALAAYAGEPAGSAVLLGNGSDELISLVALACARAQATVLAPVPGFVMYAMSAQLQGLGFVGVPLTADFELDEAAMLDAIAQHRPAITFLAYPNNPTATLWDEAVVQRIIDAAGAQGGIVVMDEAYQPFASRSWIERMRAQPERNGHVLLMRTLSKFGLAGVRLGYMIGPAALVAEVDKVRPPYNVSVLNTEAALFALEHADVFAAQADELRAARTELLAALRAMPGIERVWDSQANMVLVRVPDAARAYEGMKARKVLVKNVSTMHPLLAGCLRLTVGSSADNAQMLTALQASL.

An N6-(pyridoxal phosphate)lysine modification is found at K229.

Belongs to the class-II pyridoxal-phosphate-dependent aminotransferase family. Histidinol-phosphate aminotransferase subfamily. As to quaternary structure, homodimer. The cofactor is pyridoxal 5'-phosphate.

It carries out the reaction L-histidinol phosphate + 2-oxoglutarate = 3-(imidazol-4-yl)-2-oxopropyl phosphate + L-glutamate. It participates in amino-acid biosynthesis; L-histidine biosynthesis; L-histidine from 5-phospho-alpha-D-ribose 1-diphosphate: step 7/9. In Acidovorax ebreus (strain TPSY) (Diaphorobacter sp. (strain TPSY)), this protein is Histidinol-phosphate aminotransferase.